The primary structure comprises 373 residues: MNGTISVLLAGGGTAGHVEPAMAVADALAALEPGVRITALGTERGLETRLVPERGYALELITPVPLPRKLSGDLARLPMRVRRAVRETREILDTVHADVVIGFGGYVALPAYLAARRNRVPIVVHEANASAGLANKVGARFARRVLSAVADPGLGRVEVVGTPVRSSITELDRAALRAEARAHFGFADDARVLLVFGGSQGARSLNNVVSGAAKALAAAGISVLHAYGAKNTLELPDPAPGGPPYVAVPYLSRMDLAYAAADLAICRSGAMTVAEVTAVGLPAVYVPLPIGNGEQRLNARPVVETGGGLVVDDADLSPQFVADTVVPLLTDTGRLQTMTAGAALSGHRDAARHVAHVALDVAREAAGGRKGVR.

Residues 14–16 (TAG), Asn-128, Arg-165, Ser-199, and Gln-295 each bind UDP-N-acetyl-alpha-D-glucosamine.

The protein belongs to the glycosyltransferase 28 family. MurG subfamily.

It localises to the cell membrane. The catalysed reaction is di-trans,octa-cis-undecaprenyl diphospho-N-acetyl-alpha-D-muramoyl-L-alanyl-D-glutamyl-meso-2,6-diaminopimeloyl-D-alanyl-D-alanine + UDP-N-acetyl-alpha-D-glucosamine = di-trans,octa-cis-undecaprenyl diphospho-[N-acetyl-alpha-D-glucosaminyl-(1-&gt;4)]-N-acetyl-alpha-D-muramoyl-L-alanyl-D-glutamyl-meso-2,6-diaminopimeloyl-D-alanyl-D-alanine + UDP + H(+). It participates in cell wall biogenesis; peptidoglycan biosynthesis. Its function is as follows. Cell wall formation. Catalyzes the transfer of a GlcNAc subunit on undecaprenyl-pyrophosphoryl-MurNAc-pentapeptide (lipid intermediate I) to form undecaprenyl-pyrophosphoryl-MurNAc-(pentapeptide)GlcNAc (lipid intermediate II). This chain is UDP-N-acetylglucosamine--N-acetylmuramyl-(pentapeptide) pyrophosphoryl-undecaprenol N-acetylglucosamine transferase, found in Mycobacterium sp. (strain JLS).